The following is a 368-amino-acid chain: S-adenosylmethionine decarboxylase proenzyme 1 (368 aa).

Residues Glu9 and Arg12 contribute to the active site. The active-site Schiff-base intermediate with substrate; via pyruvic acid is Ser69. A Pyruvic acid (Ser); by autocatalysis modification is found at Ser69. Cys83 functions as the Proton donor; for catalytic activity in the catalytic mechanism. Residues Ser234 and His247 each act as proton acceptor; for processing activity in the active site.

This sequence belongs to the eukaryotic AdoMetDC family. Pyruvate is required as a cofactor. In terms of processing, is synthesized initially as an inactive proenzyme. Formation of the active enzyme involves a self-maturation process in which the active site pyruvoyl group is generated from an internal serine residue via an autocatalytic post-translational modification. Two non-identical subunits are generated from the proenzyme in this reaction, and the pyruvate is formed at the N-terminus of the alpha chain, which is derived from the carboxyl end of the proenzyme. The post-translation cleavage follows an unusual pathway, termed non-hydrolytic serinolysis, in which the side chain hydroxyl group of the serine supplies its oxygen atom to form the C-terminus of the beta chain, while the remainder of the serine residue undergoes an oxidative deamination to produce ammonia and the pyruvoyl group blocking the N-terminus of the alpha chain.

The enzyme catalyses S-adenosyl-L-methionine + H(+) = S-adenosyl 3-(methylsulfanyl)propylamine + CO2. It functions in the pathway amine and polyamine biosynthesis; S-adenosylmethioninamine biosynthesis; S-adenosylmethioninamine from S-adenosyl-L-methionine: step 1/1. This Brassica juncea (Indian mustard) protein is S-adenosylmethionine decarboxylase proenzyme 1 (SAMDC1).